The following is a 161-amino-acid chain: Large ribosomal subunit protein uL30m (161 aa).

A mitochondrion-targeting transit peptide spans 1–34 (MAGILRLVVQRPPGGLQTVTKGVESLIGTDWIRH).

The protein belongs to the universal ribosomal protein uL30 family. Component of the mitochondrial ribosome large subunit (39S) which comprises a 16S rRNA and about 50 distinct proteins.

The protein localises to the mitochondrion. In Macaca fascicularis (Crab-eating macaque), this protein is Large ribosomal subunit protein uL30m (MRPL30).